A 535-amino-acid polypeptide reads, in one-letter code: CTP synthase (535 aa).

The segment at 1–268 is amidoligase domain; it reads MSTKYIFVTG…DQIVCDHLKL (268 aa). S14 contacts CTP. S14 contacts UTP. 15-20 contacts ATP; that stretch reads SIGKGI. Y55 is an L-glutamine binding site. D72 lines the ATP pocket. Mg(2+)-binding residues include D72 and E142. CTP is bound by residues 149–151, 189–194, and K225; these read DIE and KTKPTQ. UTP-binding positions include 189-194 and K225; that span reads KTKPTQ. The Glutamine amidotransferase type-1 domain maps to 293-535; the sequence is KISLVGKYVE…FVTAAVENSN (243 aa). G355 is a binding site for L-glutamine. C382 (nucleophile; for glutamine hydrolysis) is an active-site residue. L-glutamine-binding positions include 383-386, E406, and R464; that span reads LGMQ. Catalysis depends on residues H509 and E511.

It belongs to the CTP synthase family. In terms of assembly, homotetramer.

The catalysed reaction is UTP + L-glutamine + ATP + H2O = CTP + L-glutamate + ADP + phosphate + 2 H(+). The enzyme catalyses L-glutamine + H2O = L-glutamate + NH4(+). It catalyses the reaction UTP + NH4(+) + ATP = CTP + ADP + phosphate + 2 H(+). Its pathway is pyrimidine metabolism; CTP biosynthesis via de novo pathway; CTP from UDP: step 2/2. Its activity is regulated as follows. Allosterically activated by GTP, when glutamine is the substrate; GTP has no effect on the reaction when ammonia is the substrate. The allosteric effector GTP functions by stabilizing the protein conformation that binds the tetrahedral intermediate(s) formed during glutamine hydrolysis. Inhibited by the product CTP, via allosteric rather than competitive inhibition. Its function is as follows. Catalyzes the ATP-dependent amination of UTP to CTP with either L-glutamine or ammonia as the source of nitrogen. Regulates intracellular CTP levels through interactions with the four ribonucleotide triphosphates. This is CTP synthase from Streptococcus pneumoniae (strain ATCC BAA-255 / R6).